A 357-amino-acid polypeptide reads, in one-letter code: MSKYKIIMTGGGSAGHVTPNLALVPKLKELGYEIQYIGTENGIERKIIESENIKYHIISSGKLRRYFDIKNFSDPFKVLKGVFEAKKIIKREKPNIVFSKGGFVSVPVVIGARLNRIPVISHESDMTPGLANKLAAPFCNKVCVTFPETLKYIKDNKGVLTGTPIREELFKGSKIKGYEICKFKDTTKPVLMIIGGSLGSKVINKSVRDALSNLIKKYNIIHICGKGNLDESLQNVEGYVQFDYVKDELPHLMATADLFISRAGANVIFELLALKKPNLLVPLSAKASRGDQILNAKSFEKSGYSMVIEEESLNSEVITNKIDELFKEKQKYIKNMNSSSANNCVDKIISLIEKYKK.

UDP-N-acetyl-alpha-D-glucosamine contacts are provided by residues 13–15 (SAG), R166, S197, and Q292.

Belongs to the glycosyltransferase 28 family. MurG subfamily.

Its subcellular location is the cell membrane. It carries out the reaction di-trans,octa-cis-undecaprenyl diphospho-N-acetyl-alpha-D-muramoyl-L-alanyl-D-glutamyl-meso-2,6-diaminopimeloyl-D-alanyl-D-alanine + UDP-N-acetyl-alpha-D-glucosamine = di-trans,octa-cis-undecaprenyl diphospho-[N-acetyl-alpha-D-glucosaminyl-(1-&gt;4)]-N-acetyl-alpha-D-muramoyl-L-alanyl-D-glutamyl-meso-2,6-diaminopimeloyl-D-alanyl-D-alanine + UDP + H(+). It participates in cell wall biogenesis; peptidoglycan biosynthesis. Functionally, cell wall formation. Catalyzes the transfer of a GlcNAc subunit on undecaprenyl-pyrophosphoryl-MurNAc-pentapeptide (lipid intermediate I) to form undecaprenyl-pyrophosphoryl-MurNAc-(pentapeptide)GlcNAc (lipid intermediate II). This is UDP-N-acetylglucosamine--N-acetylmuramyl-(pentapeptide) pyrophosphoryl-undecaprenol N-acetylglucosamine transferase from Clostridium novyi (strain NT).